The primary structure comprises 6629 residues: Replicase polyprotein 1ab (6629 aa).

Residues 1–1750 (MASSLKQGVS…VASYKTVLCK (1750 aa)) lie on the Cytoplasmic side of the membrane. Residues 675–780 (KTVTFGETTV…SCHLIYRDYE (106 aa)) form the Ubiquitin-like 1 domain. The segment at 783 to 802 (DDIEEEDAEECDTDSGEAEE) is disordered. In terms of domain architecture, Macro spans 1003 to 1179 (VKPATCEKPK…YFDVTCKQKT (177 aa)). Residues 1175-1227 (CKQKTIYLTEDGVKYRSIVLKPGDSLGQFGQVYAKNKIVFTADDVEDKEILYV) enclose the Ubiquitin-like 2 domain. The Peptidase C16 domain maps to 1236-1497 (EYYGLDAQKY…SKSVKEDVSN (262 aa)). The active-site For PL-PRO activity is the Cys1274. Zn(2+) is bound by residues Cys1353, Cys1355, Cys1387, and Cys1390. The C4-type; degenerate zinc-finger motif lies at 1353–1390 (CNCGIKSYELRGLEACIQPVRATNLLHFKTQYSNCPTC). Residues His1437 and Asp1448 each act as for PL-PRO activity in the active site. The chain crosses the membrane as a helical span at residues 1751–1771 (VVLATLLIVWFVYTSNPVMFT). An HD1 region spans residues 1751–1864 (VVLATLLIVW…KPVAGFVIIC (114 aa)). Positions 1769–1833 (MFTGIRVLDF…AYSVEQVYKD (65 aa)) constitute a 3Ecto domain. Residues 1772-1843 (GIRVLDFLFE…AASGFIFNWN (72 aa)) lie on the Lumenal side of the membrane. Disulfide bonds link Cys1785/Cys1811 and Cys1802/Cys1808. Residues 1844 to 1864 (WLYLVFLILFVKPVAGFVIIC) form a helical membrane-spanning segment. Topologically, residues 1865–2280 (YCVKYLVLNS…TFKCFKSYFK (416 aa)) are cytoplasmic. Positions 1911–2001 (YIQVHHILYC…KLKRHVKPTA (91 aa)) are Y1. Residues 1911 to 2263 (YIQVHHILYC…HTQKLLVEKK (353 aa)) form the CoV Nsp3 Y domain. 8 residues coordinate Zn(2+): His1915, Cys1920, Cys1925, Cys1928, Cys1961, His1964, Cys1968, and Cys1971. The ZF1 stretch occupies residues 1915–1928 (HHILYCKDVTCEVC). Residues 1961 to 1971 (CKRHNWYCRNC) form a ZF2 region. The segment at 2002–2104 (YAYHVVDEAC…ILDQALYEQL (103 aa)) is Y2. The coV-Y stretch occupies residues 2002-2263 (YAYHVVDEAC…HTQKLLVEKK (262 aa)). Residues 2105–2163 (VVEPVSKSVIDKVCSILSSIISVDTAALNYKAGTLRDALLSITKDEEAVDMAIFCHNHD) are Y3. A Y4 region spans residues 2164 to 2263 (VDYTGDGFTN…HTQKLLVEKK (100 aa)). Residues 2281–2301 (WLLIFYILFTACCSGYYYMEV) traverse the membrane as a helical segment. Residues 2281–2664 (WLLIFYILFT…LACCYLGFII (384 aa)) form an HD2 region. The Lumenal portion of the chain corresponds to 2302–2559 (SKSFVHPMYD…FFTGVNPNIY (258 aa)). The helical transmembrane segment at 2560 to 2580 (MQLATMFLILVVVVLIFAMVI) threads the bilayer. At 2581–2611 (KFQGVFKAYATTVFITMLVWVINAFILCVHS) the chain is on the cytoplasmic side. The chain crosses the membrane as a helical span at residues 2612-2632 (YNSVLAVILLVLYCYASLVTS). The Lumenal portion of the chain corresponds to 2633 to 2643 (RNTVIIMHCWL). A helical transmembrane segment spans residues 2644 to 2664 (VFTFGLIVPTWLACCYLGFII). The Cytoplasmic segment spans residues 2665–3096 (YMYTPLFLWC…SSFVRKATSW (432 aa)). In terms of domain architecture, Nsp4C spans 2684–2779 (LYDGNEFVGN…RYSIGVSRLQ (96 aa)). One can recognise a Peptidase C30 domain in the interval 2780 to 3086 (SGFKKLVSPS…FNQIGGVRLQ (307 aa)). Catalysis depends on for 3CL-PRO activity residues His2820 and Cys2922. Residues 3097–3117 (FWSRCVLACFLFVLCAIVLFT) traverse the membrane as a helical segment. Residues 3097–3317 (FWSRCVLACF…WLCTCYFGLY (221 aa)) form an HD3 region. At 3118-3121 (AVPL) the chain is on the lumenal side. Residues 3122–3142 (KFYVYAAVILLMAVLFISFTV) traverse the membrane as a helical segment. Residues 3143–3151 (KHVMAYMDT) are Cytoplasmic-facing. Residues 3152–3172 (FLLPTLITVIIGVCAEVPFIY) form a helical membrane-spanning segment. At 3173–3188 (NTLISQVVIFLSQWYD) the chain is on the lumenal side. Residues 3189–3209 (PVVFDTMVPWMFLPLVLYTAF) form a helical membrane-spanning segment. At 3210-3257 (KCVQGCYMNSFNTSLLMLYQFVKLGFVIYTSSNTLTAYTEGNWELFFE) the chain is on the cytoplasmic side. Residues 3258 to 3278 (LVHTTVLANVSSNSLIGLFVF) traverse the membrane as a helical segment. Residues 3279–3296 (KCAKWMLYYCNATYLNNY) lie on the Lumenal side of the membrane. The chain crosses the membrane as a helical span at residues 3297-3317 (VLMAVMVNCIGWLCTCYFGLY). At 3318–6629 (WWVNKVFGLT…FTSDSFVCTM (3312 aa)) the chain is on the cytoplasmic side. The RdRp Nsp7 cofactor domain maps to 3380–3462 (AKLSDVKCTT…DILKRSTVLQ (83 aa)). Residues 3463-3672 (SVTQEFSHIP…GHNKVDVVLQ (210 aa)) enclose the RdRp Nsp8 cofactor domain. Residues 3673–3783 (NNELMPHGVK…GAISNVVVLQ (111 aa)) enclose the Nsp9 ssRNA-binding domain. Positions 3785 to 3926 (KGHETEEVDA…CDSLRQPKSS (142 aa)) constitute an ExoN/MTase coactivator domain. Zn(2+) contacts are provided by Cys3858, Cys3861, His3867, Cys3878, Cys3904, Cys3907, Cys3915, and Cys3917. Zinc fingers lie at residues 3858–3878 (CLYC…DGRC) and 3904–3917 (CTVC…GCQC). In terms of domain architecture, NiRAN spans 3940–4198 (YLNRVRGSSE…APERYFEYDV (259 aa)). Residues 4203-4301 (KSYDLLKYDY…MNQDNTMSFS (99 aa)) form the Nsp12 Interface domain. 5 residues coordinate Zn(2+): His4232, Cys4238, Cys4243, Cys4247, and Cys4424. Residues 4302–4868 (KMGLSQLMQF…NMYRAPTTLQ (567 aa)) enclose the Nsp12 RNA-dependent RNA polymerase domain. A rdRp Fingers N-ter region spans residues 4304 to 4517 (GLSQLMQFVG…HQKILKSIVN (214 aa)). Positions 4518–4556 (TRNASVVIGTTKFYGGWDNMLRNLIQGVEDPILMGWDYP) are rdRp Palm N-ter. Residues 4548 to 4710 (PILMGWDYPK…CYNNTLAKQG (163 aa)) form the RdRp catalytic domain. Positions 4557 to 4615 (KCDRAMPNLLRIAASLVLARKHTNCCSWSERIYRLYNECAQVLSETVLATGGIYVKPGG) are rdRp Fingers C-ter. Zn(2+)-binding residues include His4578, Cys4581, and Cys4582. The segment at 4616-4751 (TSSGDATTAY…EKGPHEFCSQ (136 aa)) is rdRp Palm C-ter. Catalysis depends on residues Ser4695, Asp4696, and Asp4697. The rdRp Thumb stretch occupies residues 4752 to 4868 (HTMLVEVDGE…NMYRAPTTLQ (117 aa)). Positions 4869-4981 (SCGVCVVCNS…DDFNQLATTN (113 aa)) constitute a CV ZBD domain. Residues Cys4873, Cys4876, Cys4884, Cys4887, Cys4894, Cys4897, His4901, His4907, Cys4918, Cys4923, Cys4940, and His4943 each contribute to the Zn(2+) site. The (+)RNA virus helicase ATP-binding domain maps to 5125 to 5305 (MVPECFVNNI…MVCVKPDIFL (181 aa)). Position 5150-5157 (5150-5157 (GPPGSGKS)) interacts with ATP. One can recognise a (+)RNA virus helicase C-terminal domain in the interval 5306 to 5477 (AKCYRCPKEI…QGTGLFKICN (172 aa)). The ExoN domain occupies 5539–5753 (MFITRDEAIR…RCLAINNAFC (215 aa)). Catalysis depends on residues Asp5557, Glu5559, and Glu5658. Positions 5674, 5676, 5692, 5695, 5723, 5727, and 5730 each coordinate Zn(2+). Active-site residues include His5734 and Asp5739. A Zn(2+)-binding site is contributed by Cys5745. The N7-MTase domain occupies 5762-5989 (YPHIANEDEV…NLWKSFSALQ (228 aa)). 5797–5803 (DIGNPKG) is a binding site for S-adenosyl-L-methionine. The gpppA-binding stretch occupies residues 5877–5891 (CNGGSLYVNKHAFYT). 4 residues coordinate Zn(2+): Cys5915, Cys5935, Cys5946, and His5949. Residues 5990–6050 (SIDNIAYNMY…SVAFELYAKR (61 aa)) enclose the Nsp15 N-terminal oligomerization domain. Residues 6051–6166 (NIRTLPNNRI…VYKRVNGAFV (116 aa)) enclose the AV-Nsp11N/CoV-Nsp15M domain. In terms of domain architecture, NendoU spans 6183 to 6324 (EPRSDIERDF…EDGSIKTCYP (142 aa)). Catalysis depends on residues His6212, His6227, Lys6267, Lys6371, Asp6455, Lys6499, and Glu6532. Residues 6327-6626 (QSAWTCGYNM…NTSFTSDSFV (300 aa)) enclose the Nidovirus-type SAM-dependent 2'-O-MTase domain.

This sequence belongs to the coronaviruses polyprotein 1ab family. Interacts with host PHB and PHB2. In terms of assembly, interacts with papain-like protease and non-structural protein 6. As to quaternary structure, monomer. Homodimer. Only the homodimer shows catalytic activity. Eight copies of nsp7 and eight copies of nsp8 assemble to form a heterohexadecamer dsRNA-encircling ring structure. In terms of assembly, eight copies of nsp7 and eight copies of nsp8 assemble to form a heterohexadecamer dsRNA-encircling ring structure. Interacts with ORF6 protein. As to quaternary structure, homodimer. Homododecamer. Interacts with proofreading exoribonuclease nsp14 and 2'-O-methyltransferase nsp16; these interactions enhance nsp14 and nsp16 enzymatic activities. In terms of assembly, interacts with host DDX1 (via C-terminus). Interacts with non-structural protein 10. As to quaternary structure, homohexamer. Interacts with non-structural protein 10. Mn(2+) is required as a cofactor. Zn(2+) serves as cofactor. In terms of processing, specific enzymatic cleavages in vivo by its own proteases yield mature proteins. 3C-like proteinase nsp5 liberates nsps 6-16 from the polyprotein. Papain-like and 3C-like proteinases are autocatalytically processed. N-glycosylated.

The protein localises to the host endoplasmic reticulum membrane. It localises to the host cytoplasm. Its subcellular location is the host perinuclear region. It is found in the host endoplasmic reticulum. The protein resides in the host endoplasmic reticulum-Golgi intermediate compartment. It catalyses the reaction Thiol-dependent hydrolysis of ester, thioester, amide, peptide and isopeptide bonds formed by the C-terminal Gly of ubiquitin (a 76-residue protein attached to proteins as an intracellular targeting signal).. The enzyme catalyses RNA(n) + a ribonucleoside 5'-triphosphate = RNA(n+1) + diphosphate. The catalysed reaction is ATP + H2O = ADP + phosphate + H(+). It carries out the reaction uridylyl-uridylyl-ribonucleotide-RNA = a 3'-end uridylyl-2',3'-cyclophospho-uridine-RNA + a 5'-end dephospho-ribonucleoside-RNA. It catalyses the reaction a 5'-end diphospho-ribonucleoside in mRNA + GTP + H(+) = a 5'-end (5'-triphosphoguanosine)-ribonucleoside in mRNA + diphosphate. The enzyme catalyses a 5'-end (N(7)-methyl 5'-triphosphoguanosine)-ribonucleoside in mRNA + S-adenosyl-L-methionine = a 5'-end (N(7)-methyl 5'-triphosphoguanosine)-(2'-O-methyl-ribonucleoside) in mRNA + S-adenosyl-L-homocysteine + H(+). Its function is as follows. Multifunctional protein involved in the transcription and replication of viral RNAs. Contains the proteinases responsible for the cleavages of the polyprotein. May play a role in the modulation of host cell survival signaling pathway by interacting with host PHB and PHB2. Indeed, these two proteins play a role in maintaining the functional integrity of the mitochondria and protecting cells from various stresses. In terms of biological role, responsible for the cleavages located at the N-terminus of the replicase polyprotein. In addition, PL-PRO possesses a deubiquitinating/deISGylating activity and processes both 'Lys-48'- and 'Lys-63'-linked polyubiquitin chains from cellular substrates. Functionally, plays a role in host membrane rearrangement that leads to creation of cytoplasmic double-membrane vesicles (DMV) necessary for viral replication. Alone is able to induce paired membranes. Coexpression of nsp3 and nsp4 does not result in the formation of DMVs. Its function is as follows. Responsible for the majority of cleavages as it cleaves the C-terminus of replicase polyprotein at 11 sites. Recognizes substrates containing the core sequence [ILMVF]-Q-|-[SGACN]. Inhibited by the substrate-analog Cbz-Val-Asn-Ser-Thr-Leu-Gln-CMK. Forms a hexadecamer with nsp8 (8 subunits of each) that may participate in viral replication by acting as a primase. Alternatively, may synthesize substantially longer products than oligonucleotide primers. In terms of biological role, forms a hexadecamer with nsp7 (8 subunits of each) that may participate in viral replication by acting as a primase. Alternatively, may synthesize substantially longer products than oligonucleotide primers. Functionally, forms a primer, NSP9-pU, which is utilized by the polymerase for the initiation of RNA chains. Interacts with ribosome signal recognition particle RNA (SRP). Together with NSP8, suppress protein integration into the cell membrane, thereby disrupting host immune defenses. Its function is as follows. Plays a pivotal role in viral transcription by stimulating both nsp14 3'-5' exoribonuclease and nsp16 2'-O-methyltransferase activities. Therefore plays an essential role in viral mRNAs cap methylation. RNA-directed RNA polymerase that catalyzes the transcription of viral genomic and subgenomic RNAs. Acts in complex with nsp7 and nsp8 to transcribe both the minus and positive strands of genomic RNA. The kinase-like NiRAN domain of NSP12 attaches one or more nucleotides to the amino terminus of NSP9, forming a covalent RNA-protein intermediate that serves as transcription/replication primer. Subgenomic RNAs (sgRNAs) are formed by discontinuous transcription: The polymerase has the ability to pause at transcription-regulating sequences (TRS) and jump to the leader TRS, resulting in a major deletion. This creates a series of subgenomic RNAs that are replicated, transcribed and translated. In addition, Nsp12 is a subunit of the viral RNA capping enzyme that catalyzes the RNA guanylyltransferase reaction for genomic and sub-genomic RNAs. Subsequently, the NiRAN domain transfers RNA to GDP, and forms the core cap structure GpppA-RNA. In terms of biological role, multi-functional protein with a zinc-binding domain in N-terminus displaying RNA and DNA duplex-unwinding activities with 5' to 3' polarity. Activity of helicase is dependent on magnesium. Functionally, enzyme possessing two different activities: an exoribonuclease activity acting on both ssRNA and dsRNA in a 3' to 5' direction and a N7-guanine methyltransferase activity. Acts as a proofreading exoribonuclease for RNA replication, thereby lowering The sensitivity of the virus to RNA mutagens. Its function is as follows. Plays a role in viral transcription/replication and prevents the simultaneous activation of host cell dsRNA sensors, such as MDA5/IFIH1, OAS, and PKR. Acts by degrading the 5'-polyuridines generated during replication of the poly(A) region of viral genomic and subgenomic RNAs. Catalyzes a two-step reaction in which a 2'3'-cyclic phosphate (2'3'-cP) is first generated by 2'-O transesterification, which is then hydrolyzed to a 3'-phosphate (3'-P). If not degraded, poly(U) RNA would hybridize with poly(A) RNA tails and activate host dsRNA sensors. Methyltransferase that mediates mRNA cap 2'-O-ribose methylation to the 5'-cap structure of viral mRNAs. N7-methyl guanosine cap is a prerequisite for binding of nsp16. Therefore plays an essential role in viral mRNAs cap methylation which is essential to evade immune system. The protein is Replicase polyprotein 1ab (rep) of Gallus gallus (Chicken).